The sequence spans 229 residues: MKRTQNINQETFRKSWRSYRLAPVALAISAVFMLAGCEKTDETVSLYQNADDCSAANPSKSAECTTAYNTALQEAAKTAPKYATREDCVAEFGESQCTQAPAQAGMVPTSSSSSETTAAAPQQSGSMWMPLMAGYMMGRMMGGGASQPLFTSKAPNSPANGKFVDATGKNFGSATTGRTMTVPRTAMAPKPAVTNTITRGGFGESVAKQSSMQRSAATSSKTSTRSMGG.

Disordered stretches follow at residues 101–125 and 190–229; these read PAQAGMVPTSSSSSETTAAAPQQSG and KPAVTNTITRGGFGESVAKQSSMQRSAATSSKTSTRSMGG. Low complexity-rich tracts occupy residues 109–120 and 214–229; these read TSSSSSETTAAA and RSAATSSKTSTRSMGG.

The protein belongs to the UPF0441 family.

The sequence is that of UPF0441 protein YE3666 from Yersinia enterocolitica serotype O:8 / biotype 1B (strain NCTC 13174 / 8081).